The following is a 389-amino-acid chain: Aspartate aminotransferase (389 aa).

L-aspartate-binding residues include glycine 34 and asparagine 171. Lysine 233 carries the post-translational modification N6-(pyridoxal phosphate)lysine. Arginine 362 contributes to the L-aspartate binding site.

This sequence belongs to the class-I pyridoxal-phosphate-dependent aminotransferase family. In terms of assembly, homodimer. Requires pyridoxal 5'-phosphate as cofactor.

It localises to the cytoplasm. It catalyses the reaction L-aspartate + 2-oxoglutarate = oxaloacetate + L-glutamate. In Pyrococcus abyssi (strain GE5 / Orsay), this protein is Aspartate aminotransferase (aspC).